We begin with the raw amino-acid sequence, 598 residues long: Elongation factor 4 (598 aa).

The tr-type G domain occupies 2-184; that stretch reads TKIRNFSIIA…AVVDRIPPPS (183 aa). Residues 14-19 and 131-134 contribute to the GTP site; these read DHGKST and NKID.

Belongs to the TRAFAC class translation factor GTPase superfamily. Classic translation factor GTPase family. LepA subfamily.

The protein localises to the cell inner membrane. It catalyses the reaction GTP + H2O = GDP + phosphate + H(+). Required for accurate and efficient protein synthesis under certain stress conditions. May act as a fidelity factor of the translation reaction, by catalyzing a one-codon backward translocation of tRNAs on improperly translocated ribosomes. Back-translocation proceeds from a post-translocation (POST) complex to a pre-translocation (PRE) complex, thus giving elongation factor G a second chance to translocate the tRNAs correctly. Binds to ribosomes in a GTP-dependent manner. In Syntrophobacter fumaroxidans (strain DSM 10017 / MPOB), this protein is Elongation factor 4.